A 1037-amino-acid chain; its full sequence is MCIPKSNHKKLVDDCYPPPKALITSAPEYRPNSNELGRLTYYAQNKPAKLTKVGNLLESKAQADARAAKASGPAADKGKAALMITLAITKNLLTECKNSLNYFIKPSQSIIAAALDAAQPTSARPRDLEISARAASAFYALASFLDPASSVVDEGFQRLLRSFALLAVERPLGADATLGEDAEQRNRTRLIGLGALAGAVASDAIYSSNFKQLLSLLTPALVENAKANRVTLDWLRSESNKATEGEPTYAEFNIAKKPLAIRRTRSISAHVAGEKGPSSEDVISAAIGTLRGLLRHADAAQVQSIVQNVIAWLDNKSALSIPVPKDGRQLVSHWDDPEWCCWLAESLCSWTSLQYRFVVLDTLVDHLAENGEGKATNKHLSLIQMSRTILTGQLSLIGLSTSDTLSNLCALAVRRVYKDTRDSLLPPLVDCISGLGTHVYYADQINDIVEEISGRIAALQMPESISDAASVKASNNLGAVHRGQQQDLSSHLHRQRLANAGPEQRDESIRVLLFCLQGVLKATHQSSGEIHEAVDVKSNGAEKGKAAAASTDSKIGLAHAGTRNRVAPASILPTASLLASPNHAVRLAYAQTLITLFRDEFDREQLERESAVFAAAPIGEKVSDAIGVVHAIGAAAHVMCLSKSLSPPAQVLGNLRESPLELLPQIDRINADPGRPGSLSSGGSGTPAAESTAALPVDYVAVAQALEHAVTALPCSAALALTPMLVALDKDAGSRLTVHGATVNTGLENQRRLSSRMVAARVLAKLGETFDTDSVSRAAQGVLSQIPSLGIEPGPSPVGGLTLPSEVVPFSAVGSINQLGESSSSSSPSLNGALVINSLASSSKLQSATQLDAATLKRWLERDWNVGIAVDEAFAGSSPYAHSSLGTGSQQASRRPSYTPINGLSAGGNAFVNGSNASSASVNKNSRISMQAPSTGVNDLREALGTAASLSSKQANGTTQDGSLSTDRRASRRESRRGPVVTSANGSNGTSAVAILDSLKVGVDEDASRLGRDTSWSAIPAKGITNGTAPISPPYTS.

3 disordered regions span residues 881–901 (AHSS…YTPI), 947–988 (AASL…NGSN), and 1006–1037 (DASR…PYTS). Residues 948-965 (ASLSSKQANGTTQDGSLS) show a composition bias toward polar residues. The span at 966-977 (TDRRASRRESRR) shows a compositional bias: basic and acidic residues.

It belongs to the EFR3 family.

In Mycosarcoma maydis (Corn smut fungus), this protein is Protein EFR3 (EFR3).